The sequence spans 184 residues: Mitochondrial import inner membrane translocase subunit Tim22 (184 aa).

Disulfide bonds link C59-C131 and C150-C169. The next 3 helical transmembrane spans lie at 64–84 (ALAC…TAGI), 115–133 (YAKN…ECLV), and 160–180 (AGLK…AVID).

This sequence belongs to the Tim17/Tim22/Tim23 family. In terms of assembly, core component of the TIM22 complex.

The protein localises to the mitochondrion inner membrane. Its function is as follows. Essential core component of the TIM22 complex, a complex that mediates the import and insertion of multi-pass transmembrane proteins into the mitochondrial inner membrane. In the TIM22 complex, it constitutes the voltage-activated and signal-gated channel. Forms a twin-pore translocase that uses the membrane potential as external driving force in 2 voltage-dependent steps. In Xenopus laevis (African clawed frog), this protein is Mitochondrial import inner membrane translocase subunit Tim22 (timm22).